We begin with the raw amino-acid sequence, 394 residues long: MIDHFIMNKLPLELVYYLTNWLKDYDKRMLLSTCKNFLSLQSCVYYEDIYYYEEIHKLSYHQMFRKVELELCKFKTPIPKIVTNLEFDVYFNEPLINRRIKIRNKWVKIRKIIPSTVKYLDMGYSFNKSIRGALSYGLTTLIFGPEFNQPIDNYIPQTVTYLEFSVYFDQPVVGYLPTRLTHLIFGTDFNQPIKGALPDTLEYLYFGWAFNQPIDFALPPNLKCLKFGHCFDQPIKGFLPLGLEKLIFEAEYHQPMDLAIPESVEYLKLGNPGSNSLENCLPINLKTLVFGENFNENLNTLSLDKFRELEKIEFDGFFDQKISSRITIDNVIKSNNFIETFQNFYGMIKYYFNDFINPNRQYLPENVKHIIISTYLYDKICSNISNDVFIEVYN.

3 FNIP repeats span residues 126 to 167, 168 to 207, and 210 to 250; these read FNKS…FSVY, FDQP…LYFG, and FNQP…IFEA.

This chain is Putative FNIP repeat-containing protein R636, found in Acanthamoeba polyphaga mimivirus (APMV).